The chain runs to 76 residues: Parvalbumin beta 3 (76 aa).

N-acetylalanine is present on Ala1. Residues 31-66 (KSPEEVKKFFAIIDQDHSGFIEEEELKLFLQTFSAG) enclose the EF-hand domain. Asp44, Asp46, Ser48, Phe50, Glu52, and Glu55 together coordinate Ca(2+).

Belongs to the parvalbumin family.

In terms of biological role, in muscle, parvalbumin is thought to be involved in relaxation after contraction. It binds two calcium ions. The protein is Parvalbumin beta 3 of Merluccius polylepis (Southern hake).